Here is a 244-residue protein sequence, read N- to C-terminus: Glycoprotein 3 (244 aa).

Although P4 acquires its capsid proteins from helper phages such as P2, it possesses the ability to assemble capsids that are only one-third the size of the helper's capsid. The sid protein is responsible for the assembly of P4-sized shells. It forms a P4-specific scaffold with icosahedral symmetry on the outside of the procapsid-like particles. This is Glycoprotein 3 (sid) from Enterobacteria phage P4 (Bacteriophage P4).